The primary structure comprises 1135 residues: Topless-related protein 4 (1135 aa).

Residues 4 to 36 (LSRELVFLILQFLDEEKFKDTVHRLEKESGFFF) enclose the LisH domain. A CTLH domain is found at 34-92 (FFFNMRYFEDSVTAGEWDDVEKYLSGFTKVDDNRYSMKIFFEIRKQKYLEALDKKDHAK). The residue at position 214 (serine 214) is a Phosphoserine. A disordered region spans residues 281 to 303 (LKRERPRSPPTNSLSMDYQTADS). Over residues 290-303 (PTNSLSMDYQTADS) the composition is skewed to polar residues. WD repeat units follow at residues 355 to 395 (SQGS…KLVS), 417 to 456 (EYTAAVNRVVWSPDGGLLGVAYSKHIVHIYSYHGGEDLRN), 462 to 503 (AHAG…KLHT), 506 to 547 (GHEA…SRVD), 550 to 593 (APGR…VKRT), 597 to 636 (LGKRSVGVVQFDTMKNKFLVAGDEFQVKFWDMDSVDLLSS), 638 to 680 (AAEG…RILH), 776 to 815 (LLPARVVKLIYTNSGGAILALAENAAHKLWKWQKSERNLL), 843 to 881 (NKEDVVPCFALSKNDSYVMSASGGKISLFNMMTFKTMTT), 884 to 924 (APPP…VKSK), 927 to 966 (GHQKRVTGLAFSNVLNVLVSSGADSQLCVWSMDGWEKQAS), and 1020 to 1059 (ESSGSVTDAVYSCDSQSIYAAFDDGSVSILTATTLQLKCR). Residues 1095-1135 (DGGVHVIEPPGPEGKWGISAPPENGAGPSVSSAPGSDQQPR) form a disordered region. The span at 1119–1135 (GAGPSVSSAPGSDQQPR) shows a compositional bias: low complexity.

In terms of assembly, tetramer. Interacts with WUS (via the C-terminal domain). Interacts with SPL (via EAR motif). Interacts with SPEAR3/TIE1. Binds to and corepresses GAF1/IDD2 at the promoter of GA20OX2 gene.

It is found in the nucleus. Transcription corepressor of Zinc finger transcription factors GAF1/IDD2 and ENY/IDD1 in regulation of gibberellin homeostasis and signaling. This chain is Topless-related protein 4 (TPR4), found in Arabidopsis thaliana (Mouse-ear cress).